The sequence spans 154 residues: Low molecular weight protein-tyrosine-phosphatase PtpA (154 aa).

Cys-8 (nucleophile) is an active-site residue. Arg-14 is an active-site residue. Asp-120 serves as the catalytic Proton donor.

It belongs to the low molecular weight phosphotyrosine protein phosphatase family.

The catalysed reaction is O-phospho-L-tyrosyl-[protein] + H2O = L-tyrosyl-[protein] + phosphate. Its function is as follows. Dephosphorylates the phosphotyrosine-containing proteins. The sequence is that of Low molecular weight protein-tyrosine-phosphatase PtpA (ptpA) from Staphylococcus haemolyticus (strain JCSC1435).